Reading from the N-terminus, the 370-residue chain is MALQDFTPSEPLTLGVELELQLLSTHDFDLAPQAEDLLRETAKHSGAWDIKPEITRSMIEIGSSIQRRHGPLREELRDMRNQLTRAARKLNIAIAGGGTHAYQHWSEQQIFPAERFRYISELYGYLAKQFTVFGQHVHVGCPDGDQALWLLHALSRYVPHFIALSASSPYVQGQDTGFDSARLNSVFAFPLSGRAPFVRSWEEFGGFFDKMTATGVVQSMKDFYWDIRPKPEFGTIELRVCDTPLSVDKAAALACYLQCICRQLREEKPFEPSEDDYLVYTFNRFQACRFGLDGEIVDPKTKQRSRLRDDILRTLTRLDEHALDLEALDATQLLRDSLFEGNDARWLRTQRAAMLPLPAVVEAAARRWGE.

The protein belongs to the glutamate--cysteine ligase type 2 family. YbdK subfamily.

The enzyme catalyses L-cysteine + L-glutamate + ATP = gamma-L-glutamyl-L-cysteine + ADP + phosphate + H(+). Its function is as follows. ATP-dependent carboxylate-amine ligase which exhibits weak glutamate--cysteine ligase activity. The polypeptide is Putative glutamate--cysteine ligase 2 (Methylibium petroleiphilum (strain ATCC BAA-1232 / LMG 22953 / PM1)).